The chain runs to 957 residues: Vacuolar membrane protease (957 aa).

The Cytoplasmic portion of the chain corresponds to 1 to 10 (MARYNPFSFT). A helical membrane pass occupies residues 11 to 31 (PGPVVFFTTVIYVGLFAALLV). Residues 32 to 369 (THLTVPDYPS…RVFVVFQLHT (338 aa)) are Vacuolar-facing. 3 N-linked (GlcNAc...) asparagine glycosylation sites follow: Asn-48, Asn-105, and Asn-136. Zn(2+)-binding residues include His-152 and Asp-164. Glu-198 acts as the Proton acceptor in catalysis. Glu-199, Glu-224, and His-297 together coordinate Zn(2+). The chain crosses the membrane as a helical span at residues 370–390 (LFALCVTLLVVAPITLIGLTF). The Cytoplasmic portion of the chain corresponds to 391-423 (GLSKADKNYLLARKAFVYSSDDDNPVQLYGWRG). The helical transmembrane segment at 424-444 (FFRFPIIFISATAVVVALAYL) threads the bilayer. Topologically, residues 445–450 (LVRFNA) are vacuolar. Residues 451-471 (FIIYSSPFAVWSMMLSAWFFV) form a helical membrane-spanning segment. The Cytoplasmic segment spans residues 472–490 (AWFFSRGADAMRPSALQRM). The chain crosses the membrane as a helical span at residues 491–511 (YALIWLFIGSFVLLTIVTVFV). Residues 512-521 (NNYQVVAGYP) are Vacuolar-facing. Residues 522-542 (ALFYFAVVFVAIMLSYLELFF) form a helical membrane-spanning segment. Over 543-642 (APTKSAYARH…YPGEQEWSGK (100 aa)) the chain is Cytoplasmic. Disordered stretches follow at residues 559–586 (SRRN…PVAD) and 603–627 (FTRY…SQRL). Basic and acidic residues predominate over residues 603 to 613 (FTRYGSRRDSA). Residues 643–663 (LPSWIWIIQLLLLAPLVIVLV) form a helical membrane-spanning segment. Residues 664–685 (GQVALLLTSALYQTPSDGNSPL) are Vacuolar-facing. The chain crosses the membrane as a helical span at residues 686-706 (FIYLAIAALSVLLLAPTGPFI). The Cytoplasmic portion of the chain corresponds to 707–713 (HRFTYHV). The chain crosses the membrane as a helical span at residues 714-734 (PTFLFLVCLGTVIYNLVAFPF). The Vacuolar segment spans residues 735–957 (SRDHRLKVYF…LVEGFKRFEI (223 aa)). Residues Asn-782, Asn-818, and Asn-834 are each glycosylated (N-linked (GlcNAc...) asparagine).

Belongs to the peptidase M28 family. The cofactor is Zn(2+).

It is found in the vacuole membrane. Its function is as follows. May be involved in vacuolar sorting and osmoregulation. In Pyrenophora teres f. teres (strain 0-1) (Barley net blotch fungus), this protein is Vacuolar membrane protease.